Reading from the N-terminus, the 790-residue chain is MCSTYGLLSFEFSDTAAMDPIFFSPTNGIPSESKLATYMNRQNVATPSGYGLNNGFSLLNLDSPLNKKSQVTPQSPEFIPTRLGSTPNFYAPYHNAPMQLSNGLNGVNGLTAAAAAAAAAAAAAAAAVPSSTSSASSASVTISKTANGGASMLALQKTASIASVTIAQQQPQHPQKQQQHPPSVGGGAVSAASAPIAISGAPPNPAAAPFVSSMSAQTPLKGRGAMMRQESPTAAMISGAGPGEKSPPHGMTPHGASPIPSALPTSVHQENVGGTIYFYPTANAQNSQPVVNSMVVDGTHPALHGVSAVAPMSAGVPAAMMYTGHVYPGPSSNVVTMQPKTLLESAFFMPDEMRAEVLARNEISNLIMDAAEAAQHALPLEVENYHALYPLEPPAQPLHAKLTFPATTYRATHNTTGYKYCLRRIHGFRLQSTKCMTLVEMWKKLQHTNVVQLREVFTTKAFGDNSLVLVYDYHPGSQTLLAKYFTPAPETNGYTDPFQGEARPFSHKSNMQRTSNGPLLPEATIWSIIMQLTAGLKAIHHAGLACKVLDPTKIIVTGKRVRFSSCCISDITQFDPNASNPLALVNMHQQDDLTALGRLVLALACRCLQSVQRDNVQSSIDMVTRNYSTDLRNFIVYLFTTNNRRSVTDLMPMIGARFYTQLDALQSKIDMQEDELAKEMENGRLYRILVKLNSINERPDFNLDCTWSETGDRYMLKLFRDYLFHSVTEDGRPWLDHAHIVQCLNKLDAGSIERVQLMSRDEQSVLIVSYAELKNCLENAFSELMSSAAN.

Disordered regions lie at residues 166-191 (IAQQ…AVSA) and 235-259 (AMIS…ASPI). A compositionally biased stretch (low complexity) spans 168–191 (QQQPQHPQKQQQHPPSVGGGAVSA). Residues 369–655 (DAAEAAQHAL…SVTDLMPMIG (287 aa)) form a pseudokinase domain region. ATP is bound by residues R423, 472–479 (DYHPGSQT), and 552–553 (TK). The stretch at 656–694 (ARFYTQLDALQSKIDMQEDELAKEMENGRLYRILVKLNS) forms a coiled coil. Residues 695–790 (INERPDFNLD…FSELMSSAAN (96 aa)) form a knob domain region.

This sequence belongs to the protein kinase superfamily. PAN3 family. In terms of assembly, homodimer. Forms a heterotrimer with a catalytic subunit PAN2 to form the poly(A)-nuclease (PAN) deadenylation complex. Interacts (via PAM-2 motif) with poly(A)-binding protein (via PABC domain), conferring substrate specificity of the enzyme complex. Interacts with the GW182 family protein gw. Interacts with Gyf.

It localises to the cytoplasm. It is found in the P-body. In terms of biological role, regulatory subunit of the poly(A)-nuclease (PAN) deadenylation complex, one of two cytoplasmic mRNA deadenylases involved in general and miRNA-mediated mRNA turnover. PAN specifically shortens poly(A) tails of RNA and the activity is stimulated by poly(A)-binding protein (PABP). PAN deadenylation is followed by rapid degradation of the shortened mRNA tails by the CCR4-NOT complex. Deadenylated mRNAs are then degraded by two alternative mechanisms, namely exosome-mediated 3'-5' exonucleolytic degradation, or deadenylation-dependent mRNA decaping and subsequent 5'-3' exonucleolytic degradation by XRN1. PAN3 acts as a positive regulator for PAN activity, recruiting the catalytic subunit PAN2 to mRNA via its interaction with RNA and PABP, and to miRNA targets via its interaction with GW182 family proteins. This chain is PAN2-PAN3 deadenylation complex subunit PAN3, found in Drosophila melanogaster (Fruit fly).